Consider the following 447-residue polypeptide: Tubulin beta chain (447 aa).

8 residues coordinate GTP: Q11, E69, S138, G142, T143, G144, N204, and N226. Residue E69 participates in Mg(2+) binding. A disordered region spans residues 424 to 447 (QYQDAGVDEEEEEYEEEAPLEGEE). A compositionally biased stretch (acidic residues) spans 429-447 (GVDEEEEEYEEEAPLEGEE).

Belongs to the tubulin family. As to quaternary structure, dimer of alpha and beta chains. A typical microtubule is a hollow water-filled tube with an outer diameter of 25 nm and an inner diameter of 15 nM. Alpha-beta heterodimers associate head-to-tail to form protofilaments running lengthwise along the microtubule wall with the beta-tubulin subunit facing the microtubule plus end conferring a structural polarity. Microtubules usually have 13 protofilaments but different protofilament numbers can be found in some organisms and specialized cells. Requires Mg(2+) as cofactor.

The protein localises to the cytoplasm. It localises to the cytoskeleton. In terms of biological role, tubulin is the major constituent of microtubules, a cylinder consisting of laterally associated linear protofilaments composed of alpha- and beta-tubulin heterodimers. Microtubules grow by the addition of GTP-tubulin dimers to the microtubule end, where a stabilizing cap forms. Below the cap, tubulin dimers are in GDP-bound state, owing to GTPase activity of alpha-tubulin. The protein is Tubulin beta chain (tub-2) of Neurospora crassa (strain ATCC 24698 / 74-OR23-1A / CBS 708.71 / DSM 1257 / FGSC 987).